A 633-amino-acid polypeptide reads, in one-letter code: MKRLGLAALYIGSALAWPEPHGPPSRNVPRDDFPMFNPLPSTDLNTRLIRCEYPSMKGWTYSNKKNGDWLKYVGSKPGEITEYNIDTDNDKYVPQGITRKYHLEVTDESVNMDGTMFDQAKVFNKQYPGPWIQITVTNKLKHNGTAIHWHGIRMMENMFNDGVPGVTQCPIPPGSSMTYRFKASQYGSSWYHSHYSLQYADGLFGPMTIHGPTSAGYDKAVDPLLMTDHLHSSAFEEYHKELEGKPPAMDSIILNGKGDYDQTGDLKKKYRTVLKPGKKYLLRLINTSVATTFVFSIDGHKFQVVGSDFVPIEPYVTDHIAVGIGQRYHVILEGLSEEEAKKNGRYWVRTTPAKGCSKFAPGRGTDDRTGVIYYNKDDGVSPTTEIGAFSLDCRDEPLEKLVPKVKWTVPDPGLNMVGAFEKPADVQLGKWHRPGYPDTDNLVSNWEFGPSPMWINYSEPIIKNLDKDSFPSTWVVYPADDYVNDKWVYLVITGKKLKPLSSQVAVAHPIHLHGHDFVLLQQSMEPWDSTEVNLKLDNPPRREVTLLPAGGFIVIAFKPDNPGSWLLHCHIAWHASAGLALQVLERKEDLKALTLNNPDFDFMQENCRKWDAWHSDKTNYWNPSGHFQDDSGV.

The N-terminal stretch at 1 to 16 is a signal peptide; sequence MKRLGLAALYIGSALA. Residues 22-47 constitute a propeptide that is removed on maturation; it reads GPPSRNVPRDDFPMFNPLPSTDLNTR. Asparagine 143 is a glycosylation site (N-linked (GlcNAc...) asparagine). Cu cation-binding residues include histidine 148, histidine 150, histidine 192, and histidine 194. A disulfide bridge connects residues cysteine 169 and cysteine 607. The Plastocyanin-like domain occupies 224-353; that stretch reads LLMTDHLHSS…GRYWVRTTPA (130 aa). Residues asparagine 286 and asparagine 456 are each glycosylated (N-linked (GlcNAc...) asparagine). 7 residues coordinate Cu cation: histidine 508, histidine 511, histidine 513, histidine 568, cysteine 569, histidine 570, and histidine 574.

It belongs to the multicopper oxidase family. As to quaternary structure, monomer. It depends on Cu cation as a cofactor.

The protein localises to the secreted. The catalysed reaction is 4 hydroquinone + O2 = 4 benzosemiquinone + 2 H2O. This Arthroderma benhamiae (strain ATCC MYA-4681 / CBS 112371) (Trichophyton mentagrophytes) protein is Laccase ARB_05828.